Reading from the N-terminus, the 77-residue chain is Acyl carrier protein (77 aa).

Residues 1–76 (MATFDDVKAV…DVVNYIDNLK (76 aa)) enclose the Carrier domain. Serine 36 carries the O-(pantetheine 4'-phosphoryl)serine modification.

The protein belongs to the acyl carrier protein (ACP) family. 4'-phosphopantetheine is transferred from CoA to a specific serine of apo-ACP by AcpS. This modification is essential for activity because fatty acids are bound in thioester linkage to the sulfhydryl of the prosthetic group.

The protein localises to the cytoplasm. It functions in the pathway lipid metabolism; fatty acid biosynthesis. In terms of biological role, carrier of the growing fatty acid chain in fatty acid biosynthesis. The sequence is that of Acyl carrier protein from Campylobacter jejuni subsp. jejuni serotype O:6 (strain 81116 / NCTC 11828).